A 218-amino-acid chain; its full sequence is Adenylate kinase (218 aa).

10–15 (GAGKGT) is an ATP binding site. Positions 30–59 (STGDMLRAAVKAGTPLGLEAKKVMDAGGLV) are NMP. Residues threonine 31, arginine 36, 57–59 (GLV), 85–88 (GFPR), and glutamine 92 contribute to the AMP site. Residues 122–159 (GRRVHPASGRVYHTKYNPPKVEGKDDETGDELVQRDDD) form an LID region. ATP contacts are provided by residues arginine 123 and 132–133 (VY). The tract at residues 139-160 (PPKVEGKDDETGDELVQRDDDQ) is disordered. Positions 156 and 167 each coordinate AMP. Residue glycine 203 participates in ATP binding.

It belongs to the adenylate kinase family. In terms of assembly, monomer.

It is found in the cytoplasm. The catalysed reaction is AMP + ATP = 2 ADP. It functions in the pathway purine metabolism; AMP biosynthesis via salvage pathway; AMP from ADP: step 1/1. Its function is as follows. Catalyzes the reversible transfer of the terminal phosphate group between ATP and AMP. Plays an important role in cellular energy homeostasis and in adenine nucleotide metabolism. In Alcanivorax borkumensis (strain ATCC 700651 / DSM 11573 / NCIMB 13689 / SK2), this protein is Adenylate kinase.